Reading from the N-terminus, the 358-residue chain is Dual-specificity RNA methyltransferase RlmN (358 aa).

E86 acts as the Proton acceptor in catalysis. Positions R105–D338 constitute a Radical SAM core domain. An intrachain disulfide couples C112 to C343. The [4Fe-4S] cluster site is built by C119, C123, and C126. Residues G169 to E170, S201, S224 to H226, and N300 contribute to the S-adenosyl-L-methionine site. Catalysis depends on C343, which acts as the S-methylcysteine intermediate.

Belongs to the radical SAM superfamily. RlmN family. It depends on [4Fe-4S] cluster as a cofactor.

The protein resides in the cytoplasm. It catalyses the reaction adenosine(2503) in 23S rRNA + 2 reduced [2Fe-2S]-[ferredoxin] + 2 S-adenosyl-L-methionine = 2-methyladenosine(2503) in 23S rRNA + 5'-deoxyadenosine + L-methionine + 2 oxidized [2Fe-2S]-[ferredoxin] + S-adenosyl-L-homocysteine. The catalysed reaction is adenosine(37) in tRNA + 2 reduced [2Fe-2S]-[ferredoxin] + 2 S-adenosyl-L-methionine = 2-methyladenosine(37) in tRNA + 5'-deoxyadenosine + L-methionine + 2 oxidized [2Fe-2S]-[ferredoxin] + S-adenosyl-L-homocysteine. Specifically methylates position 2 of adenine 2503 in 23S rRNA and position 2 of adenine 37 in tRNAs. m2A2503 modification seems to play a crucial role in the proofreading step occurring at the peptidyl transferase center and thus would serve to optimize ribosomal fidelity. This is Dual-specificity RNA methyltransferase RlmN from Campylobacter hominis (strain ATCC BAA-381 / DSM 21671 / CCUG 45161 / LMG 19568 / NCTC 13146 / CH001A).